The sequence spans 275 residues: Elongation factor Ts (275 aa).

Positions 76-79 (TDFV) are involved in Mg(2+) ion dislocation from EF-Tu.

Belongs to the EF-Ts family.

It localises to the cytoplasm. In terms of biological role, associates with the EF-Tu.GDP complex and induces the exchange of GDP to GTP. It remains bound to the aminoacyl-tRNA.EF-Tu.GTP complex up to the GTP hydrolysis stage on the ribosome. This Nocardia farcinica (strain IFM 10152) protein is Elongation factor Ts.